The primary structure comprises 211 residues: Protein-L-isoaspartate O-methyltransferase (211 aa).

Serine 62 is a catalytic residue.

It belongs to the methyltransferase superfamily. L-isoaspartyl/D-aspartyl protein methyltransferase family.

Its subcellular location is the cytoplasm. It catalyses the reaction [protein]-L-isoaspartate + S-adenosyl-L-methionine = [protein]-L-isoaspartate alpha-methyl ester + S-adenosyl-L-homocysteine. Functionally, catalyzes the methyl esterification of L-isoaspartyl residues in peptides and proteins that result from spontaneous decomposition of normal L-aspartyl and L-asparaginyl residues. It plays a role in the repair and/or degradation of damaged proteins. The sequence is that of Protein-L-isoaspartate O-methyltransferase from Shewanella baltica (strain OS223).